Here is a 346-residue protein sequence, read N- to C-terminus: Sugar utilization regulatory protein IMP2 (346 aa).

Residues 1 to 29 are compositionally biased toward polar residues; that stretch reads MQKSILLTKPDGTQSNLHSIKTETPTTVE. Disordered stretches follow at residues 1-74 and 91-132; these read MQKS…RVRE and LRVV…DIEN. The residue at position 24 (threonine 24) is a Phosphothreonine. A compositionally biased stretch (basic residues) spans 40 to 49; the sequence is RERGRSKKKR. The segment covering 96–132 has biased composition (acidic residues); the sequence is VDSEEEGEGNDEDDDDGDGDDMDEEESDEEQVSDIEN.

Its function is as follows. Controls the nucleo-mitochondrial dependence of galactose, maltose and raffinose utilization. Becomes essential in the absence of functioning mitochondria. The sequence is that of Sugar utilization regulatory protein IMP2 (IMP2') from Saccharomyces cerevisiae (strain ATCC 204508 / S288c) (Baker's yeast).